Reading from the N-terminus, the 260-residue chain is Major prion protein (260 aa).

A signal peptide spans 1–22; the sequence is MANLGCWMLVLFVATWSDLGLC. The tract at residues 23–237 is interaction with GRB2, ERI3 and SYN1; that stretch reads KKRPKPGGWN…ESQAYYQRGS (215 aa). The disordered stretch occupies residues 26–112; it reads PKPGGWNTGG…HNQWNKPSKP (87 aa). 6 repeat units span residues 51 to 58, 59 to 66, 67 to 74, 75 to 82, 83 to 90, and 91 to 98. The 6 X 8 AA tandem repeats of P-H-G-G-G-W-G-Q stretch occupies residues 51-98; that stretch reads PQGGGWGQPHGGGWGQPHGGGWGQPHGGGWGQPHGGGWGQPHGGGWGQ. Residues 52–102 are compositionally biased toward gly residues; sequence QGGGWGQPHGGGWGQPHGGGWGQPHGGGWGQPHGGGWGQPHGGGWGQGGGT. His68, Gly69, Gly70, His76, Gly77, Gly78, His84, Gly85, Gly86, His92, Gly93, and Gly94 together coordinate Cu(2+). The cysteines at positions 186 and 221 are disulfide-linked. Asn188 and Asn204 each carry an N-linked (GlcNAc...) asparagine glycan. Ser237 carries GPI-anchor amidated serine lipidation. The propeptide at 238–260 is removed in mature form; that stretch reads SMVLFSSPPVILLISFLIFLIVG.

This sequence belongs to the prion family. In terms of assembly, monomer and homodimer. Has a tendency to aggregate into amyloid fibrils containing a cross-beta spine, formed by a steric zipper of superposed beta-strands. Soluble oligomers may represent an intermediate stage on the path to fibril formation. Copper binding may promote oligomerization. Interacts with GRB2, APP, ERI3/PRNPIP and SYN1. Mislocalized cytosolically exposed PrP interacts with MGRN1; this interaction alters MGRN1 subcellular location and causes lysosomal enlargement. Interacts with KIAA1191.

It is found in the cell membrane. The protein localises to the golgi apparatus. In terms of biological role, its primary physiological function is unclear. Has cytoprotective activity against internal or environmental stresses. May play a role in neuronal development and synaptic plasticity. May be required for neuronal myelin sheath maintenance. May play a role in iron uptake and iron homeostasis. Soluble oligomers are toxic to cultured neuroblastoma cells and induce apoptosis (in vitro). Association with GPC1 (via its heparan sulfate chains) targets PRNP to lipid rafts. Also provides Cu(2+) or Zn(2+) for the ascorbate-mediated GPC1 deaminase degradation of its heparan sulfate side chains. The protein is Major prion protein (PRNP) of Saimiri sciureus (Common squirrel monkey).